The following is a 355-amino-acid chain: UDP-N-acetylglucosamine--N-acetylmuramyl-(pentapeptide) pyrophosphoryl-undecaprenol N-acetylglucosamine transferase (355 aa).

Residues 15–17 (TGG), asparagine 127, arginine 163, serine 191, isoleucine 244, 263–268 (ALTVSE), and glutamine 288 each bind UDP-N-acetyl-alpha-D-glucosamine.

This sequence belongs to the glycosyltransferase 28 family. MurG subfamily.

The protein localises to the cell inner membrane. The enzyme catalyses di-trans,octa-cis-undecaprenyl diphospho-N-acetyl-alpha-D-muramoyl-L-alanyl-D-glutamyl-meso-2,6-diaminopimeloyl-D-alanyl-D-alanine + UDP-N-acetyl-alpha-D-glucosamine = di-trans,octa-cis-undecaprenyl diphospho-[N-acetyl-alpha-D-glucosaminyl-(1-&gt;4)]-N-acetyl-alpha-D-muramoyl-L-alanyl-D-glutamyl-meso-2,6-diaminopimeloyl-D-alanyl-D-alanine + UDP + H(+). It functions in the pathway cell wall biogenesis; peptidoglycan biosynthesis. Its function is as follows. Cell wall formation. Catalyzes the transfer of a GlcNAc subunit on undecaprenyl-pyrophosphoryl-MurNAc-pentapeptide (lipid intermediate I) to form undecaprenyl-pyrophosphoryl-MurNAc-(pentapeptide)GlcNAc (lipid intermediate II). This is UDP-N-acetylglucosamine--N-acetylmuramyl-(pentapeptide) pyrophosphoryl-undecaprenol N-acetylglucosamine transferase from Salmonella enteritidis PT4 (strain P125109).